Here is a 93-residue protein sequence, read N- to C-terminus: UPF0358 protein BLi01701/BL02974 (93 aa).

Belongs to the UPF0358 family.

This is UPF0358 protein BLi01701/BL02974 from Bacillus licheniformis (strain ATCC 14580 / DSM 13 / JCM 2505 / CCUG 7422 / NBRC 12200 / NCIMB 9375 / NCTC 10341 / NRRL NRS-1264 / Gibson 46).